We begin with the raw amino-acid sequence, 292 residues long: MTDELDDIHPILQGAPQTTEFRKLRKRIVRNVREALDQYGMVDGRDARWLVCLSGGKDSFTLLAALIELKWRGLLPVELLACNLDQGQPGFPATVLPEFLARMGIPHRIEYQDTYSIVVDKIPQGRTYCSLCSRLRRGNLYRIAREEGCSAIVLGHHRDDILETFFMNLFHGGRLATMPPKLVNEEGDLFVYRPLAFVAEADCERFARSMNYPIIPCDLCGSQDGLQRQQVKQILDGWEARSPGRRQVMFRALMNARPSHLLDPGLFDFAGLATGTASGRNGAEPPQLRGGD.

The short motif at 54-59 is the PP-loop motif element; that stretch reads SGGKDS. [4Fe-4S] cluster is bound by residues C129, C132, and C220.

This sequence belongs to the TtcA family. Homodimer. Requires Mg(2+) as cofactor. [4Fe-4S] cluster serves as cofactor.

The protein localises to the cytoplasm. The catalysed reaction is cytidine(32) in tRNA + S-sulfanyl-L-cysteinyl-[cysteine desulfurase] + AH2 + ATP = 2-thiocytidine(32) in tRNA + L-cysteinyl-[cysteine desulfurase] + A + AMP + diphosphate + H(+). Its pathway is tRNA modification. Functionally, catalyzes the ATP-dependent 2-thiolation of cytidine in position 32 of tRNA, to form 2-thiocytidine (s(2)C32). The sulfur atoms are provided by the cysteine/cysteine desulfurase (IscS) system. The protein is tRNA-cytidine(32) 2-sulfurtransferase of Cereibacter sphaeroides (strain ATCC 17025 / ATH 2.4.3) (Rhodobacter sphaeroides).